A 383-amino-acid polypeptide reads, in one-letter code: Proton extrusion protein PxcA (383 aa).

Helical transmembrane passes span 163–183, 258–278, 306–326, and 341–361; these read ILLL…AYII, AVKN…VCFA, IILF…TVLL, and FVML…KYWI.

Belongs to the CemA family.

It localises to the cell inner membrane. Required for H(+) efflux immediately after light irradiation to form a rapid H(+) concentration gradient across the thylakoid membranes. Together with PxcL, contributes to transient H(+) uptake following dark to light transition. This is Proton extrusion protein PxcA from Synechococcus sp. (strain CC9902).